The primary structure comprises 276 residues: NH(3)-dependent NAD(+) synthetase (276 aa).

ATP is bound at residue 43-50; it reads GISGGVDS. Position 49 (Asp-49) interacts with Mg(2+). Position 146 (Arg-146) interacts with deamido-NAD(+). Thr-166 is a binding site for ATP. Glu-171 is a binding site for Mg(2+). Deamido-NAD(+) contacts are provided by Lys-179 and Asp-186. ATP contacts are provided by Lys-195 and Thr-217. 266 to 267 serves as a coordination point for deamido-NAD(+); sequence HK.

Belongs to the NAD synthetase family. In terms of assembly, homodimer.

It catalyses the reaction deamido-NAD(+) + NH4(+) + ATP = AMP + diphosphate + NAD(+) + H(+). Its pathway is cofactor biosynthesis; NAD(+) biosynthesis; NAD(+) from deamido-NAD(+) (ammonia route): step 1/1. Catalyzes the ATP-dependent amidation of deamido-NAD to form NAD. Uses ammonia as a nitrogen source. This Shewanella oneidensis (strain ATCC 700550 / JCM 31522 / CIP 106686 / LMG 19005 / NCIMB 14063 / MR-1) protein is NH(3)-dependent NAD(+) synthetase.